A 347-amino-acid polypeptide reads, in one-letter code: Selenide, water dikinase (347 aa).

The active site involves C17. ATP contacts are provided by residues K20 and 48–50 (TRD). D51 contributes to the Mg(2+) binding site. ATP contacts are provided by residues D68, D91, and 139–141 (GHS). D91 is a Mg(2+) binding site. Position 227 (D227) interacts with Mg(2+).

It belongs to the selenophosphate synthase 1 family. Class I subfamily. In terms of assembly, homodimer. Mg(2+) serves as cofactor.

The enzyme catalyses hydrogenselenide + ATP + H2O = selenophosphate + AMP + phosphate + 2 H(+). Functionally, synthesizes selenophosphate from selenide and ATP. The chain is Selenide, water dikinase from Salmonella typhimurium (strain LT2 / SGSC1412 / ATCC 700720).